The primary structure comprises 184 residues: NADH-quinone oxidoreductase subunit B (184 aa).

4 residues coordinate [4Fe-4S] cluster: Cys-37, Cys-38, Cys-103, and Cys-132.

It belongs to the complex I 20 kDa subunit family. NDH-1 is composed of 14 different subunits. Subunits NuoB, C, D, E, F, and G constitute the peripheral sector of the complex. It depends on [4Fe-4S] cluster as a cofactor.

The protein resides in the cell membrane. The enzyme catalyses a quinone + NADH + 5 H(+)(in) = a quinol + NAD(+) + 4 H(+)(out). NDH-1 shuttles electrons from NADH, via FMN and iron-sulfur (Fe-S) centers, to quinones in the respiratory chain. The immediate electron acceptor for the enzyme in this species is believed to be a menaquinone. Couples the redox reaction to proton translocation (for every two electrons transferred, four hydrogen ions are translocated across the cytoplasmic membrane), and thus conserves the redox energy in a proton gradient. This chain is NADH-quinone oxidoreductase subunit B, found in Mycolicibacterium gilvum (strain PYR-GCK) (Mycobacterium gilvum (strain PYR-GCK)).